The following is a 101-amino-acid chain: U1-sicaritoxin-Li1a (101 aa).

An N-terminal signal peptide occupies residues 1 to 19; the sequence is MRFLVGAVLVVVLVACATA. Positions 20–35 are excised as a propeptide; sequence FESDAETFKSLVVEER. 4 cysteine pairs are disulfide-bonded: Cys37-Cys54, Cys45-Cys59, Cys53-Cys72, and Cys61-Cys70. Lys81 is subject to Lysine amide. The propeptide occupies 85–101; it reads ALLLPVETHRLLFPEQW.

It belongs to the neurotoxin 28 (Litx) family. In terms of tissue distribution, expressed by the venom gland.

It is found in the secreted. In terms of biological role, toxin active against insects (S.frugiperda larvae). May act on sodium (Nav) or calcium channels (Cav). The sequence is that of U1-sicaritoxin-Li1a from Loxosceles intermedia (Brown spider).